The following is a 310-amino-acid chain: L-lactate dehydrogenase (310 aa).

NAD(+) contacts are provided by residues 10–11 (MV), aspartate 32, tyrosine 62, and 76–77 (GV). Substrate-binding positions include glutamine 79, arginine 85, and 117-120 (NPVD). NAD(+)-binding positions include 115 to 117 (ATN) and serine 140. Residue 145 to 148 (DTAR) participates in substrate binding. Beta-D-fructose 1,6-bisphosphate contacts are provided by arginine 150 and histidine 165. The active-site Proton acceptor is histidine 172. Residue tyrosine 218 is modified to Phosphotyrosine. Threonine 227 is a binding site for substrate.

It belongs to the LDH/MDH superfamily. LDH family. Homotetramer.

The protein localises to the cytoplasm. The enzyme catalyses (S)-lactate + NAD(+) = pyruvate + NADH + H(+). The protein operates within fermentation; pyruvate fermentation to lactate; (S)-lactate from pyruvate: step 1/1. Allosterically activated by fructose 1,6-bisphosphate (FBP). Functionally, catalyzes the conversion of lactate to pyruvate. In Thermus thermophilus (strain ATCC 27634 / DSM 579 / HB8), this protein is L-lactate dehydrogenase.